The following is an 893-amino-acid chain: TBC domain-containing protein kinase-like protein (893 aa).

Residues 1–274 (MFPLRDTEMG…EELMHDHLFS (274 aa)) form the Protein kinase domain. One can recognise a Rab-GAP TBC domain in the interval 466-651 (DIPPLLRGIT…HLWDTLLLGN (186 aa)). A Rhodanese domain is found at 790–889 (SKPKLLVVDI…IKPTGLLTVP (100 aa)).

The protein belongs to the protein kinase superfamily. As to quaternary structure, component of the FERRY complex.

Its subcellular location is the cytoplasm. The protein localises to the cytoskeleton. It is found in the spindle. It localises to the midbody. The protein resides in the early endosome. In terms of biological role, component of the FERRY complex (Five-subunit Endosomal Rab5 and RNA/ribosome intermediary). The FERRY complex directly interacts with mRNAs and RAB5A, and functions as a RAB5A effector involved in the localization and the distribution of specific mRNAs most likely by mediating their endosomal transport. The complex recruits mRNAs and ribosomes to early endosomes through direct mRNA-interaction. Also involved in the modulation of mTOR signaling and expression of mTOR complex components. Involved in the control of actin-cytoskeleton organization. This chain is TBC domain-containing protein kinase-like protein, found in Gallus gallus (Chicken).